The primary structure comprises 123 residues: WAP four-disulfide core domain protein 5 (123 aa).

The signal sequence occupies residues 1–24; the sequence is MRFWSLFLLVVLLAVGGQLPAASG. 2 consecutive WAP domains span residues 27–74 and 75–121; these read KGER…VPRI and LVKR…RDPA. Intrachain disulfides connect cysteine 34–cysteine 62, cysteine 41–cysteine 66, cysteine 49–cysteine 61, cysteine 55–cysteine 70, cysteine 81–cysteine 109, cysteine 88–cysteine 113, cysteine 96–cysteine 108, and cysteine 102–cysteine 117.

It localises to the secreted. Putative acid-stable proteinase inhibitor. In Lemur catta (Ring-tailed lemur), this protein is WAP four-disulfide core domain protein 5 (WFDC5).